The following is a 118-amino-acid chain: UPF0102 protein NE0719 (118 aa).

It belongs to the UPF0102 family.

The chain is UPF0102 protein NE0719 from Nitrosomonas europaea (strain ATCC 19718 / CIP 103999 / KCTC 2705 / NBRC 14298).